The sequence spans 471 residues: MKMPKSIGLVHFIGIGGIGMSGIAEVLHNLGHRVQGSDQAESANVQRLRAKGIEVFVGHKPENLGDAEVVVVSTAIKKSNPELVAAREKLLPVVRRAEMLAELMRFRNAIAIGGTHGKTTTTSMVAALLEAGQLDPTVINGGIINAYGTNARMGEGEWMVVEADESDGTFLKLPADVAVVTNIDPEHLDHYGNFDAVRAAFRQFVENVPFYGFGVMCLDHPEVQALVGRIEDRKVVTYGENPQADVRFFNVRNEGTKSIFDVEIRRRRTGRVFSFKDLTLPMPGRHNISNACAAIAVANRLDISEEAIRKGLSTFGGVKRRFTLTGTWNGVQVFDDYGHHPVEIKAVLKAARESCKGRIIAVHQPHRFSRLSSLFEDFANCFNDADSILLSPVYAAGEDPIEGIDSEALVSRIRSGGHRDVRYLASPDQLAGIISTIAQPGDFVVLLGAGNITQWAAALPSELQALSGKSE.

An ATP-binding site is contributed by 114–120; that stretch reads GTHGKTT.

The protein belongs to the MurCDEF family.

Its subcellular location is the cytoplasm. The enzyme catalyses UDP-N-acetyl-alpha-D-muramate + L-alanine + ATP = UDP-N-acetyl-alpha-D-muramoyl-L-alanine + ADP + phosphate + H(+). Its pathway is cell wall biogenesis; peptidoglycan biosynthesis. In terms of biological role, cell wall formation. The sequence is that of UDP-N-acetylmuramate--L-alanine ligase from Allorhizobium ampelinum (strain ATCC BAA-846 / DSM 112012 / S4) (Agrobacterium vitis (strain S4)).